A 207-amino-acid polypeptide reads, in one-letter code: ATP-dependent Clp protease proteolytic subunit (207 aa).

The Nucleophile role is filled by Ser-111. His-136 is a catalytic residue.

Belongs to the peptidase S14 family. In terms of assembly, fourteen ClpP subunits assemble into 2 heptameric rings which stack back to back to give a disk-like structure with a central cavity, resembling the structure of eukaryotic proteasomes.

It is found in the cytoplasm. The enzyme catalyses Hydrolysis of proteins to small peptides in the presence of ATP and magnesium. alpha-casein is the usual test substrate. In the absence of ATP, only oligopeptides shorter than five residues are hydrolyzed (such as succinyl-Leu-Tyr-|-NHMec, and Leu-Tyr-Leu-|-Tyr-Trp, in which cleavage of the -Tyr-|-Leu- and -Tyr-|-Trp bonds also occurs).. Functionally, cleaves peptides in various proteins in a process that requires ATP hydrolysis. Has a chymotrypsin-like activity. Plays a major role in the degradation of misfolded proteins. In Aliivibrio salmonicida (strain LFI1238) (Vibrio salmonicida (strain LFI1238)), this protein is ATP-dependent Clp protease proteolytic subunit.